The primary structure comprises 363 residues: Phosphoserine aminotransferase (363 aa).

Arg42 is a binding site for L-glutamate. Pyridoxal 5'-phosphate-binding positions include 76–77, Trp102, Thr156, Asp175, and Gln198; that span reads GR. Lys199 carries the N6-(pyridoxal phosphate)lysine modification. 240-241 is a binding site for pyridoxal 5'-phosphate; sequence NT.

It belongs to the class-V pyridoxal-phosphate-dependent aminotransferase family. SerC subfamily. In terms of assembly, homodimer. Pyridoxal 5'-phosphate serves as cofactor.

It is found in the cytoplasm. The enzyme catalyses O-phospho-L-serine + 2-oxoglutarate = 3-phosphooxypyruvate + L-glutamate. It carries out the reaction 4-(phosphooxy)-L-threonine + 2-oxoglutarate = (R)-3-hydroxy-2-oxo-4-phosphooxybutanoate + L-glutamate. It participates in amino-acid biosynthesis; L-serine biosynthesis; L-serine from 3-phospho-D-glycerate: step 2/3. Its pathway is cofactor biosynthesis; pyridoxine 5'-phosphate biosynthesis; pyridoxine 5'-phosphate from D-erythrose 4-phosphate: step 3/5. Catalyzes the reversible conversion of 3-phosphohydroxypyruvate to phosphoserine and of 3-hydroxy-2-oxo-4-phosphonooxybutanoate to phosphohydroxythreonine. The protein is Phosphoserine aminotransferase of Shewanella baltica (strain OS185).